The following is a 234-amino-acid chain: uncharacterized protein (234 aa).

A disordered region spans residues 65–89 (QNANRQEGRRRGLRPSSDGNLRREN). The RING-type zinc finger occupies 185-220 (CAVCLHNKVCVLFQKCKHVITCGPCSLRIKECPVCK).

It belongs to the IIV-6 175R/332L family.

This is an uncharacterized protein from Acheta domesticus (House cricket).